Here is a 366-residue protein sequence, read N- to C-terminus: A-type ATP synthase subunit C (366 aa).

It belongs to the V-ATPase V0D/AC39 subunit family. In terms of assembly, has multiple subunits with at least A(3), B(3), C, D, E, F, H, I and proteolipid K(x).

It is found in the cell membrane. In terms of biological role, component of the A-type ATP synthase that produces ATP from ADP in the presence of a proton gradient across the membrane. In Thermococcus gammatolerans (strain DSM 15229 / JCM 11827 / EJ3), this protein is A-type ATP synthase subunit C.